The following is a 65-amino-acid chain: Small, acid-soluble spore protein H 3 (65 aa).

This sequence belongs to the SspH family.

Its subcellular location is the spore core. The protein is Small, acid-soluble spore protein H 3 of Geobacillus thermodenitrificans (strain NG80-2).